The primary structure comprises 164 residues: MGIIISLVAPTVSSTISSRLMIGPENNEKDAKNSDRTKYDNLAMLGRSPEQKEHVNPFEKAPVARPTRNTVDSQMMLGPPKKANDQSASDCSIYDNLVVPMSELGPTPGNKPSPNPIEGAPMIRPPQDTVSRAPDNSIYDTLQMTPEVDWSKKMTMKSMKKTGK.

A disordered region spans residues 46-142 (GRSPEQKEHV…APDNSIYDTL (97 aa)).

This is an uncharacterized protein from Caenorhabditis elegans.